Reading from the N-terminus, the 204-residue chain is Methyl-CpG-binding domain-containing protein 1 (204 aa).

Residues 1–46 (MLPFPAMNLKKSRSENSSVASSGSKIEEQTEKSAEPTTIKVQKKAG) form a disordered region. A compositionally biased stretch (polar residues) spans 15–24 (ENSSVASSGS). Positions 25–34 (KIEEQTEKSA) are enriched in basic and acidic residues. Residues 49–104 (GRSIDVFAVQCEKCMKWRKIDTQDEYEDIRSRVQEDPFFCKTKEGVSCEDVGDLNY) form a CW-type zinc finger. Residues 58-96 (QCEKCMKWRKIDTQDEYEDIRSRVQEDPFFCKTKEGVSC) carry the MBD-associated domain (MAD) motif. Zn(2+)-binding residues include Cys-59, Cys-62, Cys-88, and Cys-96. The region spanning 110 to 180 (WVIDKPGLPR…GDFNFTVPKV (71 aa)) is the MBD domain.

Mostly expressed in flowers and buds.

It localises to the nucleus. Functionally, probable transcriptional regulator. The polypeptide is Methyl-CpG-binding domain-containing protein 1 (MBD1) (Arabidopsis thaliana (Mouse-ear cress)).